Here is a 370-residue protein sequence, read N- to C-terminus: Glutamate 5-kinase (370 aa).

Residue K17 participates in ATP binding. The substrate site is built by S57, D144, and N156. ATP contacts are provided by residues 176–177 (SD) and 220–226 (TGGMASK). The PUA domain occupies 282–360 (AGALTLDDGA…HELPVEMRRP (79 aa)).

This sequence belongs to the glutamate 5-kinase family.

It localises to the cytoplasm. It catalyses the reaction L-glutamate + ATP = L-glutamyl 5-phosphate + ADP. It functions in the pathway amino-acid biosynthesis; L-proline biosynthesis; L-glutamate 5-semialdehyde from L-glutamate: step 1/2. In terms of biological role, catalyzes the transfer of a phosphate group to glutamate to form L-glutamate 5-phosphate. This chain is Glutamate 5-kinase, found in Mycolicibacterium smegmatis (strain ATCC 700084 / mc(2)155) (Mycobacterium smegmatis).